A 288-amino-acid polypeptide reads, in one-letter code: Mycothiol S-conjugate amidase (288 aa).

The Zn(2+) site is built by His12, Asp15, and His142.

This sequence belongs to the MshB deacetylase family. Mca subfamily. As to quaternary structure, monomer. Zn(2+) serves as cofactor.

The catalysed reaction is mycothiol S-conjugate + H2O = an N-acetyl-L-cysteine-S-conjugate + 1D-myo-inositol 2-amino-2-deoxy-alpha-D-glucopyranoside. Its activity is regulated as follows. Partially inhibited by MSH when MSmB (a bimane derivative of MSH) is used as substrate. In terms of biological role, a mycothiol (MSH, N-acetyl-cysteinyl-glucosaminyl-inositol) S-conjugate amidase, it recycles conjugated MSH to the N-acetyl cysteine conjugate and the MSH precursor. Involved in MSH-dependent detoxification of a number of alkylating agents and antibiotics. Activity is specific for the mycothiol moiety. This Mycolicibacterium smegmatis (strain ATCC 700084 / mc(2)155) (Mycobacterium smegmatis) protein is Mycothiol S-conjugate amidase.